The following is a 122-amino-acid chain: Large ribosomal subunit protein uL14 (122 aa).

The protein belongs to the universal ribosomal protein uL14 family. Part of the 50S ribosomal subunit. Forms a cluster with proteins L3 and L19. In the 70S ribosome, L14 and L19 interact and together make contacts with the 16S rRNA in bridges B5 and B8.

In terms of biological role, binds to 23S rRNA. Forms part of two intersubunit bridges in the 70S ribosome. This is Large ribosomal subunit protein uL14 from Clostridium botulinum (strain Alaska E43 / Type E3).